The chain runs to 96 residues: Co-chaperonin GroES (96 aa).

This sequence belongs to the GroES chaperonin family. In terms of assembly, heptamer of 7 subunits arranged in a ring. Interacts with the chaperonin GroEL.

The protein localises to the cytoplasm. Together with the chaperonin GroEL, plays an essential role in assisting protein folding. The GroEL-GroES system forms a nano-cage that allows encapsulation of the non-native substrate proteins and provides a physical environment optimized to promote and accelerate protein folding. GroES binds to the apical surface of the GroEL ring, thereby capping the opening of the GroEL channel. The chain is Co-chaperonin GroES from Hahella chejuensis (strain KCTC 2396).